Consider the following 546-residue polypeptide: DDB1- and CUL4-associated factor 11 (546 aa).

The segment covering 1 to 19 has biased composition (low complexity); it reads MGSRNSSSAGSGSGDPSEG. Positions 1 to 40 are disordered; that stretch reads MGSRNSSSAGSGSGDPSEGLTRRGAGLRRSEEEEEEDEDV. Ser-75 is subject to Phosphoserine. WD repeat units lie at residues 170–210, 216–258, 263–302, 305–345, 353–392, 435–480, and 481–520; these read SYSQ…RKFK, DVGW…TALD, ERRFAVFSIAVSSDGREVLGGANDGCLYVFDREQNRRTLQ, SHED…EDDP, GHQDGITFIDSKGDARYLISNSKDQTIKLWDIRRFSSREG, GVLH…KKLT, and NHKACVRDVSWHPFEEKIVSSSWDGNLRLWQYRQAEYFQD. The disordered stretch occupies residues 523–546; the sequence is PESEECASAPAPVPRSSTPFSSPQ. Residues 537–546 are compositionally biased toward polar residues; the sequence is RSSTPFSSPQ.

Interacts with DDB1 and CUL4A.

The protein operates within protein modification; protein ubiquitination. May function as a substrate receptor for CUL4-DDB1 E3 ubiquitin-protein ligase complex. The chain is DDB1- and CUL4-associated factor 11 (DCAF11) from Pongo abelii (Sumatran orangutan).